Reading from the N-terminus, the 471-residue chain is Rho GTPase-activating protein 15 (471 aa).

Residues 1 to 20 (MQKSTNSDIPVETLNPTRQG) form a disordered region. Residue Ser-43 is modified to Phosphoserine. The 111-residue stretch at 79–189 (MVEKEGYLQK…WFHAIKNAID (111 aa)) folds into the PH domain. Phosphoserine is present on residues Ser-196, Ser-199, and Ser-243. One can recognise a Rho-GAP domain in the interval 281–470 (SHLHTLCERE…LMLSAYDQIF (190 aa)).

The protein resides in the cytoplasm. It localises to the membrane. Functionally, GTPase activator for the Rho-type GTPases by converting them to an inactive GDP-bound state. Has activity toward RAC1. Overexpression results in an increase in actin stress fibers and cell contraction. The protein is Rho GTPase-activating protein 15 (ARHGAP15) of Bos taurus (Bovine).